The chain runs to 266 residues: Hydroxyethylthiazole kinase (266 aa).

Substrate is bound at residue Met43. ATP contacts are provided by Arg119 and Thr166. Gly193 is a substrate binding site.

This sequence belongs to the Thz kinase family. It depends on Mg(2+) as a cofactor.

It catalyses the reaction 5-(2-hydroxyethyl)-4-methylthiazole + ATP = 4-methyl-5-(2-phosphooxyethyl)-thiazole + ADP + H(+). It participates in cofactor biosynthesis; thiamine diphosphate biosynthesis; 4-methyl-5-(2-phosphoethyl)-thiazole from 5-(2-hydroxyethyl)-4-methylthiazole: step 1/1. In terms of biological role, catalyzes the phosphorylation of the hydroxyl group of 4-methyl-5-beta-hydroxyethylthiazole (THZ). This chain is Hydroxyethylthiazole kinase, found in Methanococcus maripaludis (strain C6 / ATCC BAA-1332).